The chain runs to 301 residues: 2-dehydropantoate 2-reductase (301 aa).

Residues 11 to 16, Asn107, and Ala133 contribute to the NADP(+) site; that span reads GAGAMG. Asn107 contacts substrate. Lys187 functions as the Proton donor in the catalytic mechanism. Substrate is bound by residues Asn191, Asn195, Asn205, and Ser251. Glu263 provides a ligand contact to NADP(+).

It belongs to the ketopantoate reductase family.

It localises to the cytoplasm. It carries out the reaction (R)-pantoate + NADP(+) = 2-dehydropantoate + NADPH + H(+). It participates in cofactor biosynthesis; (R)-pantothenate biosynthesis; (R)-pantoate from 3-methyl-2-oxobutanoate: step 2/2. Functionally, catalyzes the NADPH-dependent reduction of ketopantoate into pantoic acid. The protein is 2-dehydropantoate 2-reductase of Listeria innocua serovar 6a (strain ATCC BAA-680 / CLIP 11262).